We begin with the raw amino-acid sequence, 192 residues long: Xanthine phosphoribosyltransferase (192 aa).

Positions 20 and 27 each coordinate xanthine. 5-phospho-alpha-D-ribose 1-diphosphate is bound at residue 128–132 (ADGEA). Position 156 (Lys156) interacts with xanthine.

It belongs to the purine/pyrimidine phosphoribosyltransferase family. Xpt subfamily. As to quaternary structure, homodimer.

It localises to the cytoplasm. The enzyme catalyses XMP + diphosphate = xanthine + 5-phospho-alpha-D-ribose 1-diphosphate. Its pathway is purine metabolism; XMP biosynthesis via salvage pathway; XMP from xanthine: step 1/1. In terms of biological role, converts the preformed base xanthine, a product of nucleic acid breakdown, to xanthosine 5'-monophosphate (XMP), so it can be reused for RNA or DNA synthesis. The polypeptide is Xanthine phosphoribosyltransferase (Agathobacter rectalis (strain ATCC 33656 / DSM 3377 / JCM 17463 / KCTC 5835 / VPI 0990) (Eubacterium rectale)).